A 407-amino-acid polypeptide reads, in one-letter code: Phosphoglycerate kinase (407 aa).

Substrate contacts are provided by residues 21-23 (DLN), Arg36, 59-62 (HQGR), Arg116, and Arg156. ATP-binding positions include Glu332 and 358–361 (GGDT).

This sequence belongs to the phosphoglycerate kinase family. In terms of assembly, monomer.

It localises to the cytoplasm. It catalyses the reaction (2R)-3-phosphoglycerate + ATP = (2R)-3-phospho-glyceroyl phosphate + ADP. The protein operates within carbohydrate degradation; glycolysis; pyruvate from D-glyceraldehyde 3-phosphate: step 2/5. This is Phosphoglycerate kinase from Halorubrum lacusprofundi (strain ATCC 49239 / DSM 5036 / JCM 8891 / ACAM 34).